The following is a 458-amino-acid chain: Phosphoglucosamine mutase (458 aa).

The active-site Phosphoserine intermediate is the serine 106. Mg(2+)-binding residues include serine 106, aspartate 247, aspartate 249, and aspartate 251. Position 106 is a phosphoserine (serine 106).

The protein belongs to the phosphohexose mutase family. Mg(2+) serves as cofactor. Activated by phosphorylation.

The enzyme catalyses alpha-D-glucosamine 1-phosphate = D-glucosamine 6-phosphate. Functionally, catalyzes the conversion of glucosamine-6-phosphate to glucosamine-1-phosphate. The chain is Phosphoglucosamine mutase from Chlamydia trachomatis serovar A (strain ATCC VR-571B / DSM 19440 / HAR-13).